A 1055-amino-acid polypeptide reads, in one-letter code: Endo-1,4-beta-xylanase A (1055 aa).

The first 29 residues, 1–29, serve as a signal peptide directing secretion; the sequence is MRKKRRGFLNASTAVLVGILAGFLGVVLA. Residues 30-357 form an a region; it reads ATGALGFAVR…TTSAEIKLEM (328 aa). The region spanning 360–688 is the GH10 domain; sequence EEEIPALKDV…KLAYWAIVAP (329 aa). E498 serves as the catalytic Proton donor. Catalysis depends on E604, which acts as the Nucleophile. CBM-cenC domains lie at 720–851 and 895–1040; these read PIEI…TNSQ and KSVA…PTNN.

Belongs to the glycosyl hydrolase 10 (cellulase F) family.

It catalyses the reaction Endohydrolysis of (1-&gt;4)-beta-D-xylosidic linkages in xylans.. This is Endo-1,4-beta-xylanase A (xynA) from Thermotoga neapolitana.